The following is a 506-amino-acid chain: Aldehyde dehydrogenase (506 aa).

240–245 contributes to the NAD(+) binding site; it reads GSTEIG. Residues Glu-262 and Cys-301 contribute to the active site.

The protein belongs to the aldehyde dehydrogenase family.

The enzyme catalyses an aldehyde + NAD(+) + H2O = a carboxylate + NADH + 2 H(+). It participates in alcohol metabolism; ethanol degradation; acetate from ethanol: step 2/2. Functionally, may be involved in V.cholerae virulence, as its expression is under the control of ToxR, a transcriptional activator of several genes associated with virulence. This Vibrio cholerae serotype O1 (strain ATCC 39541 / Classical Ogawa 395 / O395) protein is Aldehyde dehydrogenase (aldA).